Consider the following 727-residue polypeptide: Capsid protein VP1 (727 aa).

Residues 1-10 show a composition bias toward basic residues; that stretch reads MAPPAKRARR. Disordered regions lie at residues 1 to 38 and 95 to 184; these read MAPP…SDAA and VLTD…VGIS. The Nuclear localization signal motif lies at 4–13; it reads PAKRARRGLV. The tract at residues 19 to 64 is phospholipase A2-like; the sequence is YLGPGNSLDQGEPTNPSDAAAKEHDEAYAAYLRSGKNPYLYFSPAD. A compositionally biased stretch (polar residues) spans 25-35; the sequence is SLDQGEPTNPS. Residues 166-183 show a composition bias toward gly residues; the sequence is SGNGSGGGGGGGSGGVGI. Asparagine 323 is a Mg(2+) binding site. The interval 507–536 is disordered; the sequence is AQTDENQAADGDPRYAFGRQHGQKTTTTGE. A disulfide bond links cysteine 633 and cysteine 637.

Belongs to the parvoviridae capsid protein family. In terms of assembly, interacts with host TFRC.

Its subcellular location is the virion. The protein localises to the host nucleus. Its function is as follows. Capsid protein self-assembles to form an icosahedral capsid with a T=1 symmetry, about 22 nm in diameter, and consisting of 60 copies of two size variants of the capsid proteins, VP1 and VP2, which differ by the presence of an N-terminal extension in the minor protein VP1. The capsid encapsulates the genomic ssDNA. Capsid proteins are responsible for the attachment to host cell receptor TFRC. This attachment induces virion internalization predominantly through clathrin-dependent endocytosis. Binding to the host receptors also induces capsid rearrangements leading to surface exposure of VP1 N-terminus. This Feline panleukopenia virus (FPV) protein is Capsid protein VP1.